A 245-amino-acid polypeptide reads, in one-letter code: 2,3-bisphosphoglycerate-dependent phosphoglycerate mutase (245 aa).

Substrate is bound by residues 8 to 15 (RHGQSLWN), 21 to 22 (TG), R60, 87 to 90 (ERHY), K98, 114 to 115 (RR), and 183 to 184 (GN). H9 functions as the Tele-phosphohistidine intermediate in the catalytic mechanism. E87 serves as the catalytic Proton donor/acceptor.

The protein belongs to the phosphoglycerate mutase family. BPG-dependent PGAM subfamily.

The catalysed reaction is (2R)-2-phosphoglycerate = (2R)-3-phosphoglycerate. The protein operates within carbohydrate degradation; glycolysis; pyruvate from D-glyceraldehyde 3-phosphate: step 3/5. Functionally, catalyzes the interconversion of 2-phosphoglycerate and 3-phosphoglycerate. The polypeptide is 2,3-bisphosphoglycerate-dependent phosphoglycerate mutase (Bacillus cytotoxicus (strain DSM 22905 / CIP 110041 / 391-98 / NVH 391-98)).